A 467-amino-acid polypeptide reads, in one-letter code: Microtubule-associated tyrosine carboxypeptidase 1 (467 aa).

Over residues M1–Y10 the composition is skewed to polar residues. Disordered regions lie at residues M1–P40 and M77–P111. H276 contacts Zn(2+). E277 serves as the catalytic Nucleophile. Residues H281 and E312 each coordinate Zn(2+).

Belongs to the peptidase MATCAP family. It depends on Zn(2+) as a cofactor.

The protein resides in the cytoplasm. Its subcellular location is the cytoskeleton. It catalyses the reaction C-terminal L-alpha-aminoacyl-L-glutamyl-L-glutamyl-L-tyrosyl-[tubulin] + H2O = C-terminal L-alpha-aminoacyl-L-glutamyl-L-glutamyl-[tubulin] + L-tyrosine. The catalysed reaction is C-terminal L-alpha-aminoacyl-L-glutamyl-L-glutamyl-L-phenylalanyl-[tubulin] + H2O = C-terminal L-alpha-aminoacyl-L-glutamyl-L-glutamyl-[tubulin] + L-phenylalanine. Tyrosine carboxypeptidase that removes the C-terminal tyrosine residue of alpha-tubulin, thereby regulating microtubule dynamics and function. Also able to remove the C-terminal phenylalanine residue of alpha-tubulin TUBA8. Recognizes adjacent tubulin dimers along the same protofilament. The protein is Microtubule-associated tyrosine carboxypeptidase 1 of Mus musculus (Mouse).